Here is a 255-residue protein sequence, read N- to C-terminus: Hydroxyacylglutathione hydrolase (255 aa).

Residues His55, His57, Asp59, His60, His113, Asp132, and His170 each coordinate Zn(2+).

Belongs to the metallo-beta-lactamase superfamily. Glyoxalase II family. In terms of assembly, monomer. Zn(2+) serves as cofactor.

The enzyme catalyses an S-(2-hydroxyacyl)glutathione + H2O = a 2-hydroxy carboxylate + glutathione + H(+). It participates in secondary metabolite metabolism; methylglyoxal degradation; (R)-lactate from methylglyoxal: step 2/2. In terms of biological role, thiolesterase that catalyzes the hydrolysis of S-D-lactoyl-glutathione to form glutathione and D-lactic acid. In Methylobacterium sp. (strain 4-46), this protein is Hydroxyacylglutathione hydrolase.